The sequence spans 648 residues: Transketolase (648 aa).

Histidine 22 lines the substrate pocket. Residues histidine 62 and 109-111 (GPL) contribute to the thiamine diphosphate site. Mg(2+) is bound at residue aspartate 150. 2 residues coordinate thiamine diphosphate: glycine 151 and asparagine 180. Positions 180 and 182 each coordinate Mg(2+). Histidine 252, arginine 345, and serine 372 together coordinate substrate. Histidine 252 serves as a coordination point for thiamine diphosphate. Residue glutamate 397 is the Proton donor of the active site. Residue phenylalanine 423 coordinates thiamine diphosphate. Substrate is bound by residues histidine 447, aspartate 455, and arginine 506.

It belongs to the transketolase family. Homodimer. Requires Mg(2+) as cofactor. It depends on Ca(2+) as a cofactor. Mn(2+) serves as cofactor. The cofactor is Co(2+). Thiamine diphosphate is required as a cofactor.

The enzyme catalyses D-sedoheptulose 7-phosphate + D-glyceraldehyde 3-phosphate = aldehydo-D-ribose 5-phosphate + D-xylulose 5-phosphate. In terms of biological role, catalyzes the transfer of a two-carbon ketol group from a ketose donor to an aldose acceptor, via a covalent intermediate with the cofactor thiamine pyrophosphate. The chain is Transketolase (tkt) from Mycoplasma genitalium (strain ATCC 33530 / DSM 19775 / NCTC 10195 / G37) (Mycoplasmoides genitalium).